A 675-amino-acid chain; its full sequence is MAANNFATKLSRNTNRITVILVYAFLEWLLMFFIFLNSFFTYFIVKFASFFGLKQVCLLCPKLDRIFERKPENRFTYKELLCQNHIAELASLSFCRTHGKLSESANLCSDCSNREEEQSNIGLGFCTCCQKSLADKPYPNYLLLKSSIWGKTLGDREDGGLILEMIDDDKFGDGFEIDRESYPLGFFRDKAEEGKKQDQQQNGEVISDVESYGLSLREVSEEDGLRSIISNNSPGNEAKSRVSEDEQRNDDTSNVATYGEDQISGRVEEKEEETGVADLLYDQFESKNFTGSQIEEEEEDREETTKELDPETPTSVSTLFNKKLHFLARNEYAAAEDAGDGNVLVSEMDGGDPLRTIERLRETVRAEQEALRDLYAELEEERSASAISANQTMAMITRLQEEKAKVQMEALQYQRMMEEQAEYDQEALQLLNHLMVKREKEKEQLQRELEVYRAKVLEYESKAKNKIIVVENDCEADDDDKEEENREEDNSSEMDVDLEKITLDCVQHMSMLGESLSEFEEERLVILDQLKVLEDRLVTMQDKESAEDPGEFSNSYEEASNGHGGLTMASMAKSLLPLLDAAENESEDGSQGLPESDEKNFGSDSEKLEIIKQVDSVYERLQELETDGEFLKNCMSSAKKGDKGTDILKDILQHLRDLRTIELTNTIENQTTQEE.

A helical membrane pass occupies residues 17 to 37 (ITVILVYAFLEWLLMFFIFLN). 2 disordered regions span residues 225 to 274 (LRSI…EEET) and 286 to 315 (SKNF…TPTS). Basic and acidic residues predominate over residues 238–251 (AKSRVSEDEQRNDD). The GTD-binding domain maps to 355–453 (RTIERLRETV…QLQRELEVYR (99 aa)). Acidic residues predominate over residues 474-496 (CEADDDDKEEENREEDNSSEMDV). 3 disordered regions span residues 474–497 (CEAD…MDVD), 542–565 (DKES…GHGG), and 582–605 (AENE…GSDS). Residues 596–605 (SDEKNFGSDS) are compositionally biased toward basic and acidic residues. The stretch at 605-633 (SEKLEIIKQVDSVYERLQELETDGEFLKN) forms a coiled coil.

Interacts with myosin XI-K.

The protein localises to the membrane. Its function is as follows. Membrane-anchored myosin receptors that define a distinct, plant-specific transport vesicle compartment. In Arabidopsis thaliana (Mouse-ear cress), this protein is Myosin-binding protein 3.